Consider the following 480-residue polypeptide: Phosphomethylpyrimidine synthase (480 aa).

Residues asparagine 66, methionine 95, tyrosine 124, histidine 159, serine 179 to glycine 181, aspartate 220 to arginine 223, and glutamate 259 each bind substrate. A Zn(2+)-binding site is contributed by histidine 263. Tyrosine 286 is a binding site for substrate. Histidine 327 provides a ligand contact to Zn(2+). The [4Fe-4S] cluster site is built by cysteine 407, cysteine 410, and cysteine 415. The interval aspartate 426–aspartate 480 is disordered. The span at methionine 470–aspartate 480 shows a compositional bias: acidic residues.

This sequence belongs to the ThiC family. Requires [4Fe-4S] cluster as cofactor.

The enzyme catalyses 5-amino-1-(5-phospho-beta-D-ribosyl)imidazole + S-adenosyl-L-methionine = 4-amino-2-methyl-5-(phosphooxymethyl)pyrimidine + CO + 5'-deoxyadenosine + formate + L-methionine + 3 H(+). It participates in cofactor biosynthesis; thiamine diphosphate biosynthesis. Functionally, catalyzes the synthesis of the hydroxymethylpyrimidine phosphate (HMP-P) moiety of thiamine from aminoimidazole ribotide (AIR) in a radical S-adenosyl-L-methionine (SAM)-dependent reaction. This Haloarcula marismortui (strain ATCC 43049 / DSM 3752 / JCM 8966 / VKM B-1809) (Halobacterium marismortui) protein is Phosphomethylpyrimidine synthase.